Here is a 626-residue protein sequence, read N- to C-terminus: MRMLLIHSDYLEYEVKDKALKNPEPISDEQKTGRLDEVLAVFISVEKVDETNPDEVVEKAVKEIEDVASQIKAERIFVYPFAHLSSELAKPDVALEVLRKIEEKLREKGYEVKRAPFGYYKAFKLSCKGHPLAELSRTIVPEKAVSKEERNIALEKEEKELKSYWYILTPEGELIDVDKFDFTGHENLKKFVNYEIAKNRVADREPPHVRLMLEQELVDYEPGSDAGNLRYYPKGRLIKSLLEQYVTEKVIEYGAMEVETPIMYDFEHPALEKYLNRFPARQYVVKSGDKKFFLRFAACFGQFLIKKDATISYRNLPLRMYELTRYSFRREKSGELSGLRRLRAFTMPDMHTVARDLKQAMDEFKKQYKLSMEVLKGVGLTPEDYEVAIRFTRDFWEQNRDFIVELAKIIGKPVLIEMWDQRFFYFILKFEFNFVDNLDKAAALSTVQIDVENAERFGIKYYDEEGKERTPLILHCSPSGAIERVMYAILEKQAKLQEKGIKPMYPLWLSPIQVRVIPVSDEVMDYALYVAGKLEGAKIRVDVDDTGDRLNKKIRKAEKEWIPYIIVVGRNEKEQNTVTVRRRSDGRQVEMQLEDLIREIKGQTEGFPYKPRPLPLLLSRRPKFRG.

An editing domain region spans residues 1–145 (MRMLLIHSDY…SRTIVPEKAV (145 aa)). The segment at 207 to 506 (PHVRLMLEQE…QEKGIKPMYP (300 aa)) is catalytic. Zn(2+)-binding residues include Cys299, His351, and His475.

It belongs to the class-II aminoacyl-tRNA synthetase family. Homodimer. Requires Zn(2+) as cofactor.

It is found in the cytoplasm. It catalyses the reaction tRNA(Thr) + L-threonine + ATP = L-threonyl-tRNA(Thr) + AMP + diphosphate + H(+). Functionally, catalyzes the attachment of threonine to tRNA(Thr) in a two-step reaction: L-threonine is first activated by ATP to form Thr-AMP and then transferred to the acceptor end of tRNA(Thr). Also edits incorrectly charged L-seryl-tRNA(Thr). The polypeptide is Threonine--tRNA ligase (Thermococcus kodakarensis (strain ATCC BAA-918 / JCM 12380 / KOD1) (Pyrococcus kodakaraensis (strain KOD1))).